The following is a 242-amino-acid chain: Ribonuclease PH (242 aa).

Phosphate contacts are provided by residues Arg87 and 125–127 (GTR).

It belongs to the RNase PH family. As to quaternary structure, homohexameric ring arranged as a trimer of dimers.

The catalysed reaction is tRNA(n+1) + phosphate = tRNA(n) + a ribonucleoside 5'-diphosphate. Phosphorolytic 3'-5' exoribonuclease that plays an important role in tRNA 3'-end maturation. Removes nucleotide residues following the 3'-CCA terminus of tRNAs; can also add nucleotides to the ends of RNA molecules by using nucleoside diphosphates as substrates, but this may not be physiologically important. Probably plays a role in initiation of 16S rRNA degradation (leading to ribosome degradation) during starvation. In Thermosynechococcus vestitus (strain NIES-2133 / IAM M-273 / BP-1), this protein is Ribonuclease PH.